Reading from the N-terminus, the 395-residue chain is F-box/kelch-repeat protein At4g39570 (395 aa).

The span at 1–25 (MSSPERKRKRVTSTKNPSVKKKKKI) shows a compositional bias: basic residues. The segment at 1 to 29 (MSSPERKRKRVTSTKNPSVKKKKKISPVP) is disordered. The F-box domain occupies 29–75 (PTPIPSLPDDLLVSIFARVSRLYYPILSLVSKSFRSLLRSPELYETR). Kelch repeat units follow at residues 150–197 (DIYF…VIDG) and 198–246 (KIYV…RSAY).

The chain is F-box/kelch-repeat protein At4g39570 from Arabidopsis thaliana (Mouse-ear cress).